A 317-amino-acid polypeptide reads, in one-letter code: Cell division protein FtsQ (317 aa).

Over 1–63 (MDGGGRFVFA…RIHIPAHTGT (63 aa)) the chain is Cytoplasmic. Residues 64–82 (ISAVAFYAMIGLYGMSLGG) form a helical membrane-spanning segment. The Periplasmic segment spans residues 83–317 (HTNIVTQTTT…KALKKAEKNT (235 aa)). A POTRA domain is found at 97-165 (FAVEDVKVSG…KTVEVRLKER (69 aa)).

The protein belongs to the FtsQ/DivIB family. FtsQ subfamily.

It is found in the cell inner membrane. In terms of biological role, essential cell division protein. This chain is Cell division protein FtsQ, found in Agrobacterium fabrum (strain C58 / ATCC 33970) (Agrobacterium tumefaciens (strain C58)).